The sequence spans 450 residues: Chromosomal replication initiator protein DnaA (450 aa).

A domain I, interacts with DnaA modulators region spans residues 1 to 84; the sequence is MENIHDLWDR…AVKFIIPPNQ (84 aa). Residues 84–111 are domain II; sequence QDDEELEFQSSKKKQRKPYEETNDFPQS. The interval 89 to 108 is disordered; it reads LEFQSSKKKQRKPYEETNDF. The interval 112–328 is domain III, AAA+ region; that stretch reads MLNPKYTFDT…GALIRVVAYS (217 aa). Gly-156, Gly-158, Lys-159, and Thr-160 together coordinate ATP. The domain IV, binds dsDNA stretch occupies residues 329 to 450; that stretch reads SLINKEITAD…QEIQEKLKQL (122 aa).

Belongs to the DnaA family. As to quaternary structure, oligomerizes as a right-handed, spiral filament on DNA at oriC.

The protein localises to the cytoplasm. Plays an essential role in the initiation and regulation of chromosomal replication. ATP-DnaA binds to the origin of replication (oriC) to initiate formation of the DNA replication initiation complex once per cell cycle. Binds the DnaA box (a 9 base pair repeat at the origin) and separates the double-stranded (ds)DNA. Forms a right-handed helical filament on oriC DNA; dsDNA binds to the exterior of the filament while single-stranded (ss)DNA is stabiized in the filament's interior. The ATP-DnaA-oriC complex binds and stabilizes one strand of the AT-rich DNA unwinding element (DUE), permitting loading of DNA polymerase. After initiation quickly degrades to an ADP-DnaA complex that is not apt for DNA replication. Binds acidic phospholipids. This is Chromosomal replication initiator protein DnaA from Geobacillus kaustophilus (strain HTA426).